A 439-amino-acid chain; its full sequence is Ribosomal protein uS12 methylthiotransferase RimO (439 aa).

The 116-residue stretch at 3-118 (KKFYITTLGC…AGKILREKFP (116 aa)) folds into the MTTase N-terminal domain. Residues Cys12, Cys48, Cys81, Cys157, Cys161, and Cys164 each contribute to the [4Fe-4S] cluster site. The Radical SAM core domain occupies 143–370 (NYSKPYAYVK…RDVHLAILEE (228 aa)). Positions 373 to 438 (ESRIGQTYDA…EYDMNGTWIS (66 aa)) constitute a TRAM domain.

It belongs to the methylthiotransferase family. RimO subfamily. [4Fe-4S] cluster is required as a cofactor.

The protein resides in the cytoplasm. It catalyses the reaction L-aspartate(89)-[ribosomal protein uS12]-hydrogen + (sulfur carrier)-SH + AH2 + 2 S-adenosyl-L-methionine = 3-methylsulfanyl-L-aspartate(89)-[ribosomal protein uS12]-hydrogen + (sulfur carrier)-H + 5'-deoxyadenosine + L-methionine + A + S-adenosyl-L-homocysteine + 2 H(+). In terms of biological role, catalyzes the methylthiolation of an aspartic acid residue of ribosomal protein uS12. In Leptospira borgpetersenii serovar Hardjo-bovis (strain JB197), this protein is Ribosomal protein uS12 methylthiotransferase RimO.